Here is a 219-residue protein sequence, read N- to C-terminus: 7-cyano-7-deazaguanine synthase (219 aa).

10–20 (FSGGQDSTTCL) serves as a coordination point for ATP. Residues Cys188, Cys197, Cys200, and Cys203 each coordinate Zn(2+).

It belongs to the QueC family. As to quaternary structure, homodimer. It depends on Zn(2+) as a cofactor.

It catalyses the reaction 7-carboxy-7-deazaguanine + NH4(+) + ATP = 7-cyano-7-deazaguanine + ADP + phosphate + H2O + H(+). Its pathway is purine metabolism; 7-cyano-7-deazaguanine biosynthesis. In terms of biological role, catalyzes the ATP-dependent conversion of 7-carboxy-7-deazaguanine (CDG) to 7-cyano-7-deazaguanine (preQ(0)). The protein is 7-cyano-7-deazaguanine synthase of Clostridium botulinum (strain ATCC 19397 / Type A).